The following is a 106-amino-acid chain: Large ribosomal subunit protein uL30 (106 aa).

Belongs to the universal ribosomal protein uL30 family. Part of the 50S ribosomal subunit.

The polypeptide is Large ribosomal subunit protein uL30 (Ruthia magnifica subsp. Calyptogena magnifica).